A 1071-amino-acid polypeptide reads, in one-letter code: MILRKKIELFVLPEFTEIQFEGFHRFIKYGLVKELNDFPKIEDTDQEFEFQLFSRQYQLAEPPIEERDAIYQSITYSSDLYVPAQLTERKKGRVKKQIVFLGSIPLMNSQGTFVVNGVARVIINQILRSPGIYYNSELDRNGIPIYTGTIISDWGRRLKLEIDGKTRIWARISKKRKVSILVLLLAMGLDIEEILGNVCYPKLLLGCMKRKTKKEHLQSTEDAIVELYKQIYCIGGDLNFSESISKELQKKFFQQRCELGKIGRLNLNKKLNLDVPENENFLLPQDLLAAVDYLIKIRFGIGVPDDIDHLKNRRVRSVTDLLQDQLKLALNRLENSIRQAIRGANRREHLPTPKSLVTSTPLITTFKEFFGSHPLSQFLDQTNPLTEVVHKRRLSSLGPGGLTRRTASFQVRDIHPSHYGRICPIETSEGMNAGLVASLAIHAKVDNWGSLESPFYKISGVSEEEDMTFLSAGEDENYHIATGNCLALNQTNQEEQVTPARYRQEFVATAWNQINLRSIFPLQYFSIGTSLIPFLEHNDANRALMGFNMQRQAVPLSKPEKCIVGTGLESQTALDSGSVIVATEGGRISYTDGRRITLLTKEKEVETKLVIYQRSNNSTCIHEKPRIQLREYVKKGQILADGRATAGGELALGKNILVAYMPWEGYNFEDAILISERLIHEDIYTSIHIERYEIEARVTSQGPERITREIPHLDNYLLRHLDESGLVLPGSWVETGDVLVGKLTPQETEESLRAPEGKLLQAIFGIQVVTAKETCLKVPLGGRGRVIDIKWIYQEKTSTTYAEIVHVYILQKREIQVGDKVAGRHGNKGIISKILPRQDMPYLQDGTPVDMVLSPLGVPSRMNVGQIFECLLGLAGDFLQKHYRVTPFDERYEREASRKLVFSELHEASRQTANPWLFESDNPGKSGLLDGRTGDIFEEPVTIGKAYMLKLIHQVDDKIHARSSGPYALVTQQPLRGKSRRGGQRVGEMEVWALEGFGAAYTLEEMLTIKSDHIQARFEVLRAIVTGELIPKPETAPESFRLLVRELRSLALNLDHIIVSEKELRIKFKDI.

The protein belongs to the RNA polymerase beta chain family. In terms of assembly, in plastids the minimal PEP RNA polymerase catalytic core is composed of four subunits: alpha, beta, beta', and beta''. When a (nuclear-encoded) sigma factor is associated with the core the holoenzyme is formed, which can initiate transcription.

The protein resides in the plastid. It localises to the chloroplast. The enzyme catalyses RNA(n) + a ribonucleoside 5'-triphosphate = RNA(n+1) + diphosphate. DNA-dependent RNA polymerase catalyzes the transcription of DNA into RNA using the four ribonucleoside triphosphates as substrates. The polypeptide is DNA-directed RNA polymerase subunit beta (Anthoceros angustus (Hornwort)).